A 177-amino-acid chain; its full sequence is Peptide methionine sulfoxide reductase MsrA 2 (177 aa).

The active site involves Cys-12.

Belongs to the MsrA Met sulfoxide reductase family.

It carries out the reaction L-methionyl-[protein] + [thioredoxin]-disulfide + H2O = L-methionyl-(S)-S-oxide-[protein] + [thioredoxin]-dithiol. The enzyme catalyses [thioredoxin]-disulfide + L-methionine + H2O = L-methionine (S)-S-oxide + [thioredoxin]-dithiol. Its function is as follows. Has an important function as a repair enzyme for proteins that have been inactivated by oxidation. Catalyzes the reversible oxidation-reduction of methionine sulfoxide in proteins to methionine. The chain is Peptide methionine sulfoxide reductase MsrA 2 (msrA2) from Staphylococcus aureus (strain NCTC 8325 / PS 47).